Here is a 577-residue protein sequence, read N- to C-terminus: External alternative NAD(P)H-ubiquinone oxidoreductase B1, mitochondrial (577 aa).

The N-terminal 35 residues, 1–35, are a transit peptide targeting the mitochondrion; sequence MRGFTYLSKVLHSHSSYSKLLVLCSVSTGGLLVYA. 57–87 is an FAD binding site; sequence RVVVLGTGWGGTSFLKDVDISSYDVQVVSPR. 221-257 lines the NAD(+) pocket; that stretch reads LHFVIVGGGPTGVEFAAELHDYVYEDLVKIYPSVKDF. Positions 378–413 constitute an EF-hand domain; the sequence is KVMEDISTIFEAADKDDSGTLSVEEFRDVLEDIIIR. The Ca(2+) site is built by Asp391, Asp393, Ser395, Thr397, and Glu402. A Microbody targeting signal motif is present at residues 568–577; that stretch reads YIFGRDSSRI.

It belongs to the NADH dehydrogenase family. FAD serves as cofactor.

The protein localises to the mitochondrion inner membrane. It is found in the peroxisome. It carries out the reaction a quinone + NADH + H(+) = a quinol + NAD(+). The catalysed reaction is a ubiquinone + NADH + H(+) = a ubiquinol + NAD(+). Its activity is regulated as follows. Activity is calcium-dependent with a more pronounced effect at higher pH. Its function is as follows. Calcium-dependent NAD(P)H dehydrogenase. Binds calcium ions. Alternative NADH-ubiquinone oxidoreductase which catalyzes the oxidation of mitochondrial NADH does not translocate protons across the inner mitochondrial membrane. The polypeptide is External alternative NAD(P)H-ubiquinone oxidoreductase B1, mitochondrial (NDB1) (Solanum tuberosum (Potato)).